The following is a 308-amino-acid chain: Glutaminase (308 aa).

7 residues coordinate substrate: Ser66, Asn117, Glu161, Asn168, Tyr192, Tyr244, and Val262.

The protein belongs to the glutaminase family. Homotetramer.

The catalysed reaction is L-glutamine + H2O = L-glutamate + NH4(+). In Klebsiella pneumoniae subsp. pneumoniae (strain ATCC 700721 / MGH 78578), this protein is Glutaminase.